The primary structure comprises 780 residues: ATP-dependent 6-phosphofructokinase, muscle type (780 aa).

T2 carries the N-acetylthreonine modification. The segment at 2 to 390 (THEEHHAAKT…NWEVYKLLAH (389 aa)) is N-terminal catalytic PFK domain 1. ATP is bound by residues G25, 88–89 (RC), and 118–121 (GDGS). D119 is a binding site for Mg(2+). S133 carries the post-translational modification Phosphoserine. Residues 164–166 (SID), R201, 208–210 (MGR), E264, R292, and 298–301 (HVQR) contribute to the substrate site. Residue D166 is the Proton acceptor of the active site. S377 is modified (phosphoserine). The segment at 391 to 401 (IRPPVSKSGSH) is interdomain linker. The segment at 402-780 (TVAVMNVGAP…SRKRSGEAPA (379 aa)) is C-terminal regulatory PFK domain 2. Residues R471 and 528 to 532 (TVSNN) contribute to the beta-D-fructose 2,6-bisphosphate site. The O-linked (GlcNAc) serine glycan is linked to S530. K557 carries the post-translational modification N6-(2-hydroxyisobutyryl)lysine. Beta-D-fructose 2,6-bisphosphate contacts are provided by residues R566, 573 to 575 (MGG), E629, R655, and 661 to 664 (HMQQ). At S667 the chain carries Phosphoserine. R735 is a beta-D-fructose 2,6-bisphosphate binding site. At S775 the chain carries Phosphoserine.

The protein belongs to the phosphofructokinase type A (PFKA) family. ATP-dependent PFK group I subfamily. Eukaryotic two domain clade 'E' sub-subfamily. Homo- and heterotetramers. Phosphofructokinase (PFK) enzyme functions as a tetramer composed of different combinations of 3 types of subunits, called PFKM (M), PFKL (L) and PFKP (P). The composition of the PFK tetramer differs according to the tissue type it is present in. The kinetic and regulatory properties of the tetrameric enzyme are dependent on the subunit composition, hence can vary across tissues. Interacts (via C-terminus) with HK1 (via N-terminal spermatogenic cell-specific region). Mg(2+) serves as cofactor. Post-translationally, glcNAcylation decreases enzyme activity.

The protein resides in the cytoplasm. The catalysed reaction is beta-D-fructose 6-phosphate + ATP = beta-D-fructose 1,6-bisphosphate + ADP + H(+). It functions in the pathway carbohydrate degradation; glycolysis; D-glyceraldehyde 3-phosphate and glycerone phosphate from D-glucose: step 3/4. With respect to regulation, allosterically activated by ADP, AMP, or fructose 2,6-bisphosphate, and allosterically inhibited by ATP or citrate. Functionally, catalyzes the phosphorylation of D-fructose 6-phosphate to fructose 1,6-bisphosphate by ATP, the first committing step of glycolysis. This chain is ATP-dependent 6-phosphofructokinase, muscle type (PFKM), found in Equus caballus (Horse).